A 718-amino-acid polypeptide reads, in one-letter code: Methionine--tRNA ligase (718 aa).

A 'HIGH' region motif is present at residues 27 to 37 (PYANGQIHIGH). Zn(2+) contacts are provided by Cys158, Cys161, Cys171, and Cys174. The 'KMSKS' region motif lies at 348–352 (KMSKS). ATP is bound at residue Lys351. A tRNA-binding domain is found at 612–718 (DFAKIDLRIA…SGAKPGMRVK (107 aa)).

It belongs to the class-I aminoacyl-tRNA synthetase family. MetG type 1 subfamily. In terms of assembly, homodimer. Zn(2+) is required as a cofactor.

It localises to the cytoplasm. The enzyme catalyses tRNA(Met) + L-methionine + ATP = L-methionyl-tRNA(Met) + AMP + diphosphate. Is required not only for elongation of protein synthesis but also for the initiation of all mRNA translation through initiator tRNA(fMet) aminoacylation. This is Methionine--tRNA ligase from Burkholderia orbicola (strain AU 1054).